Consider the following 445-residue polypeptide: MSPESRKLLNIIILGIGFMFMFTAFQTSGNVAQTVISSLNSTSFHGSGYTSLAIIYSVFSASNLIAPSIVAVIGCQMSMFLSGLLYSAYIAMFIQPYTWSFYTLSVLIGIAAAVLWTAQGSCLTINSDDTTIGKHSGIFWALLQFSMLFGNLFIYLAWKGEINISDSDRRTVFIALTVISLVGSVLFFLIRTPESDDAQEDDISNSAADAEGTMSAQSCFAKAIDAFKRSLKLSITKEMLLLSILVAYTGLELTFYSGVYGTCIGSMKVFEADAKSLIGLSGIFVGLGEVLGGGLFGLLGKYNYFGRNPVVILGVVVHFLAFYMIYLYMPSDAPIASREGTYLRAFINPSKTIALACSFLLGLGDSCYNTQMLSILGSLYPDNSAPAFAVFKFVQSVSAAVAFFYSNYLLLHWQLLILVIFGFFGTISFFFVEWGLTRRSQYNSM.

The helical transmembrane segment at 8 to 28 (LLNIIILGIGFMFMFTAFQTS) threads the bilayer. N-linked (GlcNAc...) asparagine glycosylation occurs at N40. Helical transmembrane passes span 53–73 (AIIY…VAVI), 74–94 (GCQM…AMFI), 98–118 (TWSF…LWTA), and 138–158 (IFWA…YLAW). N163 carries N-linked (GlcNAc...) asparagine glycosylation. Transmembrane regions (helical) follow at residues 170-190 (RTVF…FFLI), 239-259 (MLLL…YSGV), 277-297 (LIGL…GLFG), 309-329 (PVVI…YLYM), 345-365 (AFIN…GLGD), 385-405 (APAF…AFFY), and 415-435 (LLIL…VEWG).

It belongs to the unc-93 family.

Its subcellular location is the membrane. In Xenopus tropicalis (Western clawed frog), this protein is UNC93-like protein MFSD11 (mfsd11).